A 153-amino-acid chain; its full sequence is MDQEAVGNVVLLAIVTLISVVQNGFFAHKVEHESRNQNGRSFQRTGTLAFERVYTANQNCVDAYPTFLAVLWTAGLLCSQVPAAFAGLMYLFVRQKYFVGYLGERTQSTPGYIFGKRIILFLFLMSLAGILNYCLILLFGSDFENYIKTISTT.

The Lumenal portion of the chain corresponds to 1-8 (MDQEAVGN). The chain crosses the membrane as a helical span at residues 9–30 (VVLLAIVTLISVVQNGFFAHKV). The Cytoplasmic portion of the chain corresponds to 31–52 (EHESRNQNGRSFQRTGTLAFER). The helical transmembrane segment at 53–77 (VYTANQNCVDAYPTFLAVLWTAGLL) threads the bilayer. Over 78–80 (CSQ) the chain is Lumenal. A helical transmembrane segment spans residues 81–102 (VPAAFAGLMYLFVRQKYFVGYL). At 103–107 (GERTQ) the chain is on the cytoplasmic side. An intramembrane segment occupies 108 to 115 (STPGYIFG). A helical membrane pass occupies residues 116-128 (KRIILFLFLMSLA). The Lumenal segment spans residues 129-153 (GILNYCLILLFGSDFENYIKTISTT).

The protein belongs to the MAPEG family. As to quaternary structure, homotrimer. Interacts with LTC4S and ALOX5.

Its subcellular location is the nucleus membrane. The protein resides in the endoplasmic reticulum membrane. Functionally, required for leukotriene biosynthesis by ALOX5 (5-lipoxygenase). Anchors ALOX5 to the membrane. Binds arachidonic acid, and could play an essential role in the transfer of arachidonic acid to ALOX5. Binds to MK-886, a compound that blocks the biosynthesis of leukotrienes. The protein is Arachidonate 5-lipoxygenase-activating protein (ALOX5AP) of Oryctolagus cuniculus (Rabbit).